The primary structure comprises 471 residues: Tigger transposable element-derived protein 3 (471 aa).

The region spanning 3–55 (LSSKKKLHALSLAEKIQVLELLDESKMSQSEVARRFQVSQPQISRICKNKEKL) is the HTH psq-type domain. 2 consecutive DNA-binding regions (H-T-H motif) follow at residues 31 to 51 (QSEV…ICKN) and 100 to 130 (PMLL…WKRR). Positions 67–137 (ERKRKRESKY…KRRNNVGFGA (71 aa)) constitute an HTH CENPB-type domain. Positions 167–360 (FSPEDVFGCA…VPPQLIFSSF (194 aa)) constitute a DDE-1 domain.

This sequence belongs to the tigger transposable element derived protein family.

The protein localises to the nucleus. This Homo sapiens (Human) protein is Tigger transposable element-derived protein 3 (TIGD3).